A 572-amino-acid chain; its full sequence is Urease subunit alpha (572 aa).

The 440-residue stretch at 133–572 (GGIDLHVHYI…TSLSQRYFLF (440 aa)) folds into the Urease domain. Ni(2+) is bound by residues histidine 138, histidine 140, and lysine 221. Residue lysine 221 is modified to N6-carboxylysine. Histidine 223 provides a ligand contact to substrate. Residues histidine 250 and histidine 276 each coordinate Ni(2+). Histidine 324 functions as the Proton donor in the catalytic mechanism. Aspartate 364 contributes to the Ni(2+) binding site.

Belongs to the metallo-dependent hydrolases superfamily. Urease alpha subunit family. In terms of assembly, heterotrimer of UreA (gamma), UreB (beta) and UreC (alpha) subunits. Three heterotrimers associate to form the active enzyme. The cofactor is Ni cation. Carboxylation allows a single lysine to coordinate two nickel ions.

The protein resides in the cytoplasm. The catalysed reaction is urea + 2 H2O + H(+) = hydrogencarbonate + 2 NH4(+). It functions in the pathway nitrogen metabolism; urea degradation; CO(2) and NH(3) from urea (urease route): step 1/1. The protein is Urease subunit alpha of Streptococcus thermophilus (strain CNRZ 1066).